The chain runs to 661 residues: Fusaric acid cluster transcription factor FUB12 (661 aa).

A DNA-binding region (zn(2)-C6 fungal-type) is located at residues C17–C48. Disordered regions lie at residues T57–G131 and S151–D184. A compositionally biased stretch (polar residues) spans P73–S98. A compositionally biased stretch (basic and acidic residues) spans S99 to H109. A compositionally biased stretch (polar residues) spans A110–N119. Residues D120–P129 show a composition bias toward basic and acidic residues.

It is found in the nucleus. Functionally, efflux pump involved in export of biosynthesis of fusaric acid, a mycotoxin with low to moderate toxicity to animals and humans, but with high phytotoxic properties. Constitutes a self-protecting mechanism of the fungus against critical levels of FSA within the cell. This Fusarium oxysporum f. sp. lycopersici (strain 4287 / CBS 123668 / FGSC 9935 / NRRL 34936) (Fusarium vascular wilt of tomato) protein is Fusaric acid cluster transcription factor FUB12.